A 2045-amino-acid polypeptide reads, in one-letter code: Host cell factor 1 (2045 aa).

The residue at position 2 (A2) is an N-acetylalanine. The residue at position 6 (S6) is a Phosphoserine. Kelch repeat units lie at residues L44–C89, R93–H140, K148–G194, K217–N265, and K266–T313. Residues K105, K163, and K244 each participate in a glycyl lysine isopeptide (Lys-Gly) (interchain with G-Cter in ubiquitin) cross-link. K282 participates in a covalent cross-link: Glycyl lysine isopeptide (Lys-Gly) (interchain with G-Cter in SUMO2). Residue K288 is modified to N6-acetyllysine. A Glycyl lysine isopeptide (Lys-Gly) (interchain with G-Cter in ubiquitin) cross-link involves residue K363. Residues P366–S457 form the Fibronectin type-III 1 domain. Residues A407 to A434 form a disordered region. The residue at position 411 (S411) is a Phosphoserine. Residues T413–P428 show a composition bias toward pro residues. The interval L500–A550 is required for interaction with OGT. Omega-N-methylarginine occurs at positions 504 and 524. Phosphoserine occurs at positions 598, 666, and 669. The interval L610–L722 is interaction with SIN3A. The tract at residues I750 to T902 is interaction with ZBTB17. K813 carries the N6-acetyllysine modification. An interaction with GABP2 region spans residues K813–T912. 3 HCF repeat repeats span residues T1010–A1035, V1072–N1097, and Q1101–S1126. Residues V1157–T1182 form an HCF repeat 4; degenerate repeat. The residue at position 1204 (S1204) is a Phosphoserine. At R1216 the chain carries Asymmetric dimethylarginine. 4 disordered regions span residues L1219–N1242, P1302–G1375, T1444–I1475, and T1494–P1525. S1223 carries the phosphoserine modification. HCF repeat repeat units follow at residues T1295–G1320 and Q1323–N1348. Positions T1308–S1321 are enriched in low complexity. Residues Q1358–G1383 form an HCF repeat 7; degenerate repeat. An HCF repeat 8 repeat occupies Q1423 to N1448. Phosphothreonine is present on T1500. Residues V1502–E1511 show a composition bias toward pro residues. Residues S1506, S1516, and S1781 each carry the phosphoserine modification. Fibronectin type-III domains lie at P1808–P1898 and F1900–D2016. Residues K1817 and K1818 each participate in a glycyl lysine isopeptide (Lys-Gly) (interchain with G-Cter in ubiquitin) cross-link. Phosphoserine is present on S1848. The interval A2004–Q2045 is disordered. N6-acetyllysine is present on K2015. K2034 is covalently cross-linked (Glycyl lysine isopeptide (Lys-Gly) (interchain with G-Cter in SUMO2)).

Composed predominantly of six polypeptides ranging from 110 to 150 kDa and a minor 300 kDa polypeptide. The majority of N- and C-terminal cleavage products remain tightly, albeit non-covalently, associated. Interacts with POU2F1, CREB3, ZBTB17, EGR2, E2F4, CREBZF, SP1, GABP2, Sin3 HDAC complex (SIN3A, HDAC1, HDAC2, SUDS3), SAP30, SIN3B and FHL2. Component of a MLL1 complex, composed of at least the core components KMT2A/MLL1, ASH2L, HCFC1, WDR5 and RBBP5, as well as the facultative components BACC1, CHD8, DPY30, E2F6, HCFC2, HSP70, INO80C, KANSL1, LAS1L, MAX, MCRS1, MEN1, MGA, KAT8, PELP1, PHF20, PRP31, RING2, RUVBL1, RUVBL2, SENP3, TAF1, TAF4, TAF6, TAF7, TAF9 and TEX10. Component of a THAP1/THAP3-HCFC1-OGT complex that is required for the regulation of the transcriptional activity of RRM1. Interacts directly with THAP3 (via its HBM). Interacts (via the Kelch-repeat domain) with THAP1 (via the HBM); the interaction recruits HCHC1 to the RRM1. Interacts with THAP7 and THAP11 (via the HMB). Interacts directly with OGT; the interaction, which requires the HCFC1 cleavage site domain, glycosylates and promotes the proteolytic processing of HCFC1 and retains OGT in the nucleus. Component of the SET1 complex, at least composed of the catalytic subunit (SETD1A or SETD1B), WDR5, WDR82, RBBP5, ASH2L, CXXC1, HCFC1 and DPY30. Component of the NSL complex at least composed of MOF/KAT8, KANSL1, KANSL2, KANSL3, MCRS1, PHF20, OGT1/OGT, WDR5 and HCFC1. Component of a complex at least composed of ZNF335, HCFC1, CCAR2, EMSY, MKI67, RBBP5, ASH2L and WDR5; the complex is formed as a result of interactions between components of a nuclear receptor-mediated transcription complex and a histone methylation complex. Within the complex interacts with ZNF335. Interacts with TET2 and TET3. Interacts with HCFC1R1. Interacts with THAP11. Interacts (via Kelch domain) with KMT2E (via HBM motif). Interacts with E2F1. Accessory scaffold component of the polycomb repressive deubiquitinase (PR-DUB) complex, at least composed of BAP1, one of ASXL1, ASXL2 or (probably) ASXL3 and one of MBD5 or MBD6; the PR-DUB core associates with a number of accessory proteins, including FOXK1, FOXK2, KDM1B, HCFC1, YY1 and OGT. Interacts with YY1 (via Gly-rich region); the interaction is direct. Interacts with BAP1 (via HBM-like motif). Proteolytically cleaved at one or several PPCE--THET sites within the HCF repeats. Further cleavage of the primary N- and C-terminal chains results in a 'trimming' and accumulation of the smaller chains. Cleavage is promoted by O-glycosylation. Post-translationally, O-glycosylated. GlcNAcylation by OGT promotes proteolytic processing. In terms of processing, ubiquitinated. Lys-1817 and Lys-1818 are ubiquitinated both via 'Lys-48'- and 'Lys-63'-linked polyubiquitin chains. BAP1 mediated deubiquitination of 'Lys-48'-linked polyubiquitin chains; deubiquitination by BAP1 does not seem to stabilize the protein. In terms of tissue distribution, expressed in liver, pituitary gland, skeletal muscle, kidney, eye and brain (at protein level). Also observed at low level in heart, spleen and lung.

The protein localises to the nucleus. Its subcellular location is the cytoplasm. Functionally, transcriptional coregulator. Serves as a scaffold protein, bridging interactions between transcription factors, including THAP11 and ZNF143, and transcriptional coregulators. Involved in control of the cell cycle. Also antagonizes transactivation by ZBTB17 and GABP2; represses ZBTB17 activation of the p15(INK4b) promoter and inhibits its ability to recruit p300. Coactivator for EGR2 and GABP2. Tethers the chromatin modifying Set1/Ash2 histone H3 'Lys-4' methyltransferase (H3K4me) and Sin3 histone deacetylase (HDAC) complexes (involved in the activation and repression of transcription respectively) together. As part of the NSL complex it may be involved in acetylation of nucleosomal histone H4 on several lysine residues. Recruits KMT2E to E2F1 responsive promoters promoting transcriptional activation and thereby facilitates G1 to S phase transition. Modulates expression of homeobox protein PDX1, perhaps acting in concert with transcription factor E2F1, thereby regulating pancreatic beta-cell growth and glucose-stimulated insulin secretion. May negatively modulate transcriptional activity of FOXO3. This is Host cell factor 1 from Mus musculus (Mouse).